Here is a 98-residue protein sequence, read N- to C-terminus: Large ribosomal subunit protein eL14 (98 aa).

This sequence belongs to the eukaryotic ribosomal protein eL14 family.

This is Large ribosomal subunit protein eL14 from Thermofilum pendens (strain DSM 2475 / Hrk 5).